A 422-amino-acid polypeptide reads, in one-letter code: UPF0761 membrane protein LHK_02978 (422 aa).

The next 6 membrane-spanning stretches (helical) occupy residues 44–64 (LLSLVPLITITLIVVAAFPVF), 102–122 (LTAVGLALLAFTSLSLMLTID), 141–161 (MLVYWTVLTLGPLLLGVGISG), 178–198 (LAGIIQNLGSLTLATVMLTVL), 212–232 (ALIGGALTALTLGVAQAGFGL), and 246–266 (AFATFPFLLIWLQLMWLTVLI).

This sequence belongs to the UPF0761 family.

The protein localises to the cell inner membrane. The protein is UPF0761 membrane protein LHK_02978 of Laribacter hongkongensis (strain HLHK9).